We begin with the raw amino-acid sequence, 41 residues long: Trypsin inhibitor 2c (41 aa).

Intrachain disulfides connect cysteine 11-cysteine 32 and cysteine 15-cysteine 28.

In terms of biological role, inhibits bovine trypsin with a Ki of 0.174 nM and trypsin-like proteases from G.mellonella larvae. Has no activity against serine proteases chymotrypsin, subtilisin and elastase. Has no activity against cysteine proteases from beetle gut. This is Trypsin inhibitor 2c from Fagopyrum esculentum (Common buckwheat).